A 165-amino-acid chain; its full sequence is Lipoprotein signal peptidase (165 aa).

The next 3 helical transmembrane spans lie at 9–29 (FLAI…VLLY), 69–89 (KYFL…FLFL), and 98–118 (IRFS…DILF). Residues Asp-124 and Asp-142 contribute to the active site. A helical membrane pass occupies residues 133 to 153 (WYFPTFNFADIFISLGTFIFV).

The protein belongs to the peptidase A8 family.

The protein resides in the cell inner membrane. It carries out the reaction Release of signal peptides from bacterial membrane prolipoproteins. Hydrolyzes -Xaa-Yaa-Zaa-|-(S,diacylglyceryl)Cys-, in which Xaa is hydrophobic (preferably Leu), and Yaa (Ala or Ser) and Zaa (Gly or Ala) have small, neutral side chains.. Its pathway is protein modification; lipoprotein biosynthesis (signal peptide cleavage). Functionally, this protein specifically catalyzes the removal of signal peptides from prolipoproteins. This Chlamydia caviae (strain ATCC VR-813 / DSM 19441 / 03DC25 / GPIC) (Chlamydophila caviae) protein is Lipoprotein signal peptidase.